The following is a 466-amino-acid chain: UDP-N-acetylmuramoylalanine--D-glutamate ligase (466 aa).

121 to 127 (GTNGKST) serves as a coordination point for ATP.

Belongs to the MurCDEF family.

It is found in the cytoplasm. It catalyses the reaction UDP-N-acetyl-alpha-D-muramoyl-L-alanine + D-glutamate + ATP = UDP-N-acetyl-alpha-D-muramoyl-L-alanyl-D-glutamate + ADP + phosphate + H(+). It functions in the pathway cell wall biogenesis; peptidoglycan biosynthesis. Cell wall formation. Catalyzes the addition of glutamate to the nucleotide precursor UDP-N-acetylmuramoyl-L-alanine (UMA). This chain is UDP-N-acetylmuramoylalanine--D-glutamate ligase, found in Rhodopseudomonas palustris (strain HaA2).